The following is a 127-amino-acid chain: Glycine cleavage system H protein (127 aa).

Residues 24–106 (TATIGITDYA…YAEGWMLKLK (83 aa)) form the Lipoyl-binding domain. Lys-65 is modified (N6-lipoyllysine).

It belongs to the GcvH family. In terms of assembly, the glycine cleavage system is composed of four proteins: P, T, L and H. Requires (R)-lipoate as cofactor.

Functionally, the glycine cleavage system catalyzes the degradation of glycine. The H protein shuttles the methylamine group of glycine from the P protein to the T protein. The sequence is that of Glycine cleavage system H protein from Opitutus terrae (strain DSM 11246 / JCM 15787 / PB90-1).